Reading from the N-terminus, the 479-residue chain is MLAVPNMRFGIFLLWWGWVLATESRMHWPGREVHEMSKKGRPQRQRREVHEDAHKQVSPILRRSPDITKSPLTKSEQLLRIDDHDFSMRPGFGGPAIPVGVDVQVESLDSISEVDMDFTMTLYLRHYWKDERLSFPSTNNLSMTFDGRLVKKIWVPDMFFVHSKRSFIHDTTTDNVMLRVQPDGKVLYSLRVTVTAMCNMDFSRFPLDTQTCSLEIESYAYTEDDLMLYWKKGNDSLKTDERISLSQFLIQEFHTTTKLAFYSSTGWYNRLYINFTLRRHIFFFLLQTYFPATLMVMLSWVSFWIDRRAVPARVPLGITTVLTMSTIITGVNASMPRVSYIKAVDIYLWVSFVFVFLSVLEYAAVNYLTTVQERKEQKLREKLPCTSGLPPPRTAMLDGNYSDGEVNDLDNYMPENGEKPDRMMVQLTLASERSSPQRKSQRSSYVSMRIDTHAIDKYSRIIFPAAYILFNLIYWSIFS.

A signal peptide spans M1–A21. Residues T22 to H280 lie on the Extracellular side of the membrane. Positions E32–K55 are disordered. A compositionally biased stretch (basic and acidic residues) spans Q45–K55. R125 provides a ligand contact to 4-aminobutanoate. N-linked (GlcNAc...) asparagine glycosylation is present at N140. 4-aminobutanoate is bound at residue S189. A disulfide bond links C198 and C212. Residue E217 participates in 4-aminobutanoate binding. N-linked (GlcNAc...) asparagine glycosylation is found at N234 and N274. Residues I281–V301 form a helical membrane-spanning segment. Topologically, residues S302–R313 are cytoplasmic. A helical membrane pass occupies residues V314–S334. Residues M335–D345 lie on the Extracellular side of the membrane. Residues I346–N366 form a helical membrane-spanning segment. Residues Y367–K457 lie on the Cytoplasmic side of the membrane. Residues Y458 to F478 form a helical membrane-spanning segment. Residue S479 is a topological domain, extracellular.

The protein belongs to the ligand-gated ion channel (TC 1.A.9) family. Gamma-aminobutyric acid receptor (TC 1.A.9.5) subfamily. GABRR1 sub-subfamily. In terms of assembly, three rho subunits (rho-1/GBRR1, rho-2/GBRR2 and rho-3/GBRR3) coassemble either to form functional homopentamers or heteropentamers. Rho-1/GBRR1 subunits can also associate with alpha-1/GBRA1 subunits to form a functional GABAAR. Interacts with SQSTM1. Highly expressed in the retina. Expressed in a lesser extent in brain, lung and thymus.

The protein resides in the postsynaptic cell membrane. It localises to the cell membrane. The enzyme catalyses chloride(in) = chloride(out). Inhibited by TPMPA, a rho-specific antagonist, when forming a homopentamer. In contrast with other GABAARs, rho-1 GABAAR is not inhibited by bicuculline, when forming a homopentamer. Functionally, rho subunit of the pentameric ligand-gated chloride channels responsible for mediating the effects of gamma-aminobutyric acid (GABA), the major inhibitory neurotransmitter in the brain. Rho-containing GABA-gated chloride channels are a subclass of GABA(A) receptors (GABAARs) entirely composed of rho subunits, where GABA molecules bind at the rho intersubunit interfaces. When activated by GABA, rho-GABAARs selectively allow the flow of chloride anions across the cell membrane down their electrochemical gradient. Rho-1 subunits are primarily expressed in retina where rho-1-containing GABAARs may play a role in retinal neurotransmission. Rho-1 GABAARs are also involved in neuronal tonic (extrasynaptic) and phasic (synaptic) transmission in the Purkinje neurons of the cerebellum. Rho-1 GABAARs may also contribute to the regulation of glial development in the cerebellum by controlling extrasynaptic transmission. This is Gamma-aminobutyric acid receptor subunit rho-1 from Homo sapiens (Human).